The chain runs to 1226 residues: 3-hydroxy-3-methylglutaryl-coenzyme A reductase (1226 aa).

5 helical membrane passes run Ile-17–Gly-37, Ile-224–Ala-244, Phe-252–Met-272, Val-337–Asn-357, and Leu-373–Val-393. Residues Asp-223–Ile-391 enclose the SSD domain. The tract at residues Leu-428–Arg-449 is disordered. The span at Lys-434–Asn-445 shows a compositional bias: polar residues. The helical transmembrane segment at Leu-481–Ser-501 threads the bilayer. Disordered stretches follow at residues Ala-683–Leu-702 and Leu-722–Pro-742. Residues Ala-685 to Leu-702 show a composition bias toward pro residues. Glu-869 serves as the catalytic Charge relay system. Residue Ser-875–Lys-881 coordinates CoA. Residues Ser-936 to Phe-938 and Asp-963 to Ser-971 each bind NADP(+). Catalysis depends on Lys-1001, which acts as the Charge relay system. Val-1030–Lys-1032 is a CoA binding site. Asp-1077 (charge relay system) is an active-site residue. The chain crosses the membrane as a helical span at residues Ile-1150–His-1170. Ala-1174–His-1175 contributes to the CoA binding site. The active-site Proton donor is the His-1175. Asn-1179–Arg-1180 lines the NADP(+) pocket. The segment at Gln-1182–Lys-1226 is disordered. The segment covering His-1201–Ala-1210 has biased composition (polar residues).

This sequence belongs to the HMG-CoA reductase family.

The protein resides in the endoplasmic reticulum membrane. It catalyses the reaction (R)-mevalonate + 2 NADP(+) + CoA = (3S)-3-hydroxy-3-methylglutaryl-CoA + 2 NADPH + 2 H(+). Its pathway is metabolic intermediate biosynthesis; (R)-mevalonate biosynthesis; (R)-mevalonate from acetyl-CoA: step 3/3. In terms of biological role, HMG-CoA reductase; part of the first module of ergosterol biosynthesis pathway that includes the early steps of the pathway, conserved across all eukaryotes, and which results in the formation of mevalonate from acetyl-coenzyme A (acetyl-CoA). This module also plays a key role in the biosynthesis of triterpenes such as ganoderic acids (GA), a group of highly oxygenated lanostane-type triterpenoids which are well recognized as a main group of unique bioactive compounds in the medicinal mushroom Ganoderma lucidum. In this module, the acetyl-CoA acetyltransferase catalyzes the formation of acetoacetyl-CoA. The hydroxymethylglutaryl-CoA synthase HMGS then condenses acetyl-CoA with acetoacetyl-CoA to form HMG-CoA. The rate-limiting step of the early module is the reduction to mevalonate by the 3-hydroxy-3-methylglutaryl-coenzyme A (HMG-CoA) reductase. This is 3-hydroxy-3-methylglutaryl-coenzyme A reductase from Ganoderma lucidum (Ling zhi medicinal fungus).